Consider the following 305-residue polypeptide: UDP-3-O-acyl-N-acetylglucosamine deacetylase (305 aa).

Zn(2+) contacts are provided by H78, H237, and D241. Catalysis depends on H264, which acts as the Proton donor.

It belongs to the LpxC family. It depends on Zn(2+) as a cofactor.

It catalyses the reaction a UDP-3-O-[(3R)-3-hydroxyacyl]-N-acetyl-alpha-D-glucosamine + H2O = a UDP-3-O-[(3R)-3-hydroxyacyl]-alpha-D-glucosamine + acetate. Its pathway is glycolipid biosynthesis; lipid IV(A) biosynthesis; lipid IV(A) from (3R)-3-hydroxytetradecanoyl-[acyl-carrier-protein] and UDP-N-acetyl-alpha-D-glucosamine: step 2/6. In terms of biological role, catalyzes the hydrolysis of UDP-3-O-myristoyl-N-acetylglucosamine to form UDP-3-O-myristoylglucosamine and acetate, the committed step in lipid A biosynthesis. The chain is UDP-3-O-acyl-N-acetylglucosamine deacetylase from Burkholderia pseudomallei (strain 668).